A 134-amino-acid chain; its full sequence is MTEESTKENLGAPKSPTPVTMEKNPKREVVVTTGPLVSEVQLMAATGGAELSCYRCIIPFAVVVFITGIVVTAVAYSFNSHGSIISIFGLVLLSSGLFLLASSALCWKVRQRNKKVKRRESQTALVVNQRCLFA.

The segment at 1–23 (MTEESTKENLGAPKSPTPVTMEK) is disordered. The residue at position 15 (serine 15) is a Phosphoserine. The next 2 helical transmembrane spans lie at 56-76 (CIIPFAVVVFITGIVVTAVAY) and 84-104 (IISIFGLVLLSSGLFLLASSA). Residue serine 121 is modified to Phosphoserine.

In terms of assembly, interacts (via C-terminus) with TRPA1 and TRPV1. Interacts with TASOR. In terms of tissue distribution, expressed in dorsal root ganglia. Expressed in neurons as well as nerve fiber bundles connecting ganglia and fibers innervating muscle layer of the gastric body, jejunum, and proximal colon. Expressed in arterial endothelial cells and neurons of the central nervous system and peripheral nervous system (at protein level). Expressed strongly in lung, weakly in brain, heart and muscle. Expressed in enteric neurons and vascular tissue in the muscularis propria of the gastrointestinal tract.

The protein resides in the cell membrane. Its subcellular location is the membrane. It is found in the perikaryon. The protein localises to the cytoplasm. It localises to the perinuclear region. The protein resides in the endoplasmic reticulum. In terms of biological role, plays a role during embryonic arterial endothelium differentiation and vascular morphogenesis through the ACVRL1 receptor-dependent signaling pathway upon stimulation by bone morphogenetic proteins, such as GDF2/BMP9 and BMP10. Involved in the regulation of nociception, acting as a modulator of the interaction between TRPA1 and TRPV1, two molecular sensors and mediators of pain signals in dorsal root ganglia (DRG) neurons. Mechanistically, it weakens their interaction, thereby releasing the inhibition of TRPA1 by TRPV1 and increasing the single-channel open probability of the TRPA1-TRPV1 complex. The protein is Transmembrane protein 100 (Tmem100) of Mus musculus (Mouse).